The primary structure comprises 66 residues: Large ribosomal subunit protein bL33c (66 aa).

The protein belongs to the bacterial ribosomal protein bL33 family.

It localises to the plastid. The protein resides in the chloroplast. The polypeptide is Large ribosomal subunit protein bL33c (Nandina domestica (Heavenly bamboo)).